Here is a 330-residue protein sequence, read N- to C-terminus: Quinone oxidoreductase (330 aa).

A2 is modified (N-acetylalanine). K23 bears the N6-acetyllysine mark. Residues Y53, 158 to 161 (SGGV), G181, H200, N229, 246 to 249 (VGSK), and 269 to 271 (VTL) contribute to the NADP(+) site. S248 is subject to Phosphoserine.

Belongs to the zinc-containing alcohol dehydrogenase family. Quinone oxidoreductase subfamily. In terms of assembly, homotetramer.

It is found in the cytoplasm. It carries out the reaction 2 a quinone + NADPH + H(+) = 2 a 1,4-benzosemiquinone + NADP(+). Does not have alcohol dehydrogenase activity. Binds NADP and acts through a one-electron transfer process. Orthoquinones, such as 1,2-naphthoquinone or 9,10-phenanthrenequinone, are the best substrates (in vitro). May act in the detoxification of xenobiotics. Interacts with (AU)-rich elements (ARE) in the 3'-UTR of target mRNA species and enhances their stability. NADPH binding interferes with mRNA binding. The chain is Quinone oxidoreductase (CRYZ) from Lama guanicoe (Guanaco).